Reading from the N-terminus, the 432-residue chain is Putative D-alanyl-D-alanine carboxypeptidase (432 aa).

A helical; Signal-anchor transmembrane segment spans residues 7 to 25 (ATVLLTFSLSAFAVEYPVL).

This sequence belongs to the peptidase S12 family. YfeW subfamily.

The protein localises to the cell inner membrane. The enzyme catalyses Preferential cleavage: (Ac)2-L-Lys-D-Ala-|-D-Ala. Also transpeptidation of peptidyl-alanyl moieties that are N-acyl substituents of D-alanine.. The protein is Putative D-alanyl-D-alanine carboxypeptidase of Salmonella gallinarum (strain 287/91 / NCTC 13346).